The chain runs to 937 residues: Protocadherin alpha-7 (937 aa).

An N-terminal signal peptide occupies residues 1–29 (MVNLRGYNWKSQQLLLFLIIVAAWEAGSG). Residues 30–697 (QLHYSVPEEA…RVDQRLVDVN (668 aa)) are Extracellular-facing. Cadherin domains are found at residues 34-133 (SVPE…PPMF), 157-242 (ASDA…APVF), 243-350 (DRSL…APQL), 351-455 (TVSS…APLF), 456-565 (AQPE…APTL), and 587-682 (PGQV…SSKV). Residues Cys-96 and Cys-102 are joined by a disulfide bond. Thr-223 and Thr-225 each carry an O-linked (Man) threonine glycan. Residues Asn-257 and Asn-265 are each glycosylated (N-linked (GlcNAc...) asparagine). O-linked (Man) threonine glycosylation is present at Thr-438. O-linked (Man) serine glycosylation occurs at Ser-478. An N-linked (GlcNAc...) asparagine glycan is attached at Asn-548. Residues 698-718 (VYLIIAICAVSSLLVLTLLLY) form a helical membrane-spanning segment. The Cytoplasmic portion of the chain corresponds to 719 to 937 (TALRCSATPT…GNSTTDNSDQ (219 aa)). Disordered stretches follow at residues 755 to 794 (RQRV…PDWR) and 816 to 843 (RAGP…EVSP). PXXP repeat units follow at residues 774–777 (PSLP), 786–789 (PRQP), 819–822 (PGGP), 860–863 (PGNP), and 878–881 (PGSP). Positions 774-881 (PSLPQGPSST…PDKFIIPGSP (108 aa)) are 5 X 4 AA repeats of P-X-X-P. Positions 775–787 (SLPQGPSSTDNPR) are enriched in polar residues. The tract at residues 887-937 (RQEPANNQIDKSDFITFGKKEETKKKKKKKKGNKTQEKKEKGNSTTDNSDQ) is disordered. Residues 896–910 (DKSDFITFGKKEETK) are compositionally biased toward basic and acidic residues.

As to quaternary structure, forms homodimers in trans (molecules expressed by two different cells). Forms promiscuous heterodimers in cis (at the plasma membrane of the same cell) with other protocadherins.

The protein localises to the cell membrane. Calcium-dependent cell-adhesion protein involved in cells self-recognition and non-self discrimination. Thereby, it is involved in the establishment and maintenance of specific neuronal connections in the brain. The polypeptide is Protocadherin alpha-7 (Mus musculus (Mouse)).